The sequence spans 149 residues: Sec-independent protein translocase protein TatB (149 aa).

Residues 1–22 traverse the membrane as a helical segment; sequence MFDGIGFMELLLIGVLGLIVLG. Residues 86-113 are compositionally biased toward polar residues; that stretch reads LKQAAQSVNRPYQVQDTPSAQDNQIHNP. The segment at 86-149 is disordered; sequence LKQAAQSVNR…DPRSNTKANG (64 aa). Residues 114 to 135 are compositionally biased toward low complexity; the sequence is ASQTVSTEASSTSASSAPKSES.

This sequence belongs to the TatB family. In terms of assembly, the Tat system comprises two distinct complexes: a TatABC complex, containing multiple copies of TatA, TatB and TatC subunits, and a separate TatA complex, containing only TatA subunits. Substrates initially bind to the TatABC complex, which probably triggers association of the separate TatA complex to form the active translocon.

It is found in the cell inner membrane. Part of the twin-arginine translocation (Tat) system that transports large folded proteins containing a characteristic twin-arginine motif in their signal peptide across membranes. Together with TatC, TatB is part of a receptor directly interacting with Tat signal peptides. TatB may form an oligomeric binding site that transiently accommodates folded Tat precursor proteins before their translocation. This Shewanella oneidensis (strain ATCC 700550 / JCM 31522 / CIP 106686 / LMG 19005 / NCIMB 14063 / MR-1) protein is Sec-independent protein translocase protein TatB.